Here is a 365-residue protein sequence, read N- to C-terminus: Histidinol-phosphate aminotransferase (365 aa).

Lys-220 carries the N6-(pyridoxal phosphate)lysine modification.

The protein belongs to the class-II pyridoxal-phosphate-dependent aminotransferase family. Histidinol-phosphate aminotransferase subfamily. As to quaternary structure, homodimer. Pyridoxal 5'-phosphate is required as a cofactor.

It carries out the reaction L-histidinol phosphate + 2-oxoglutarate = 3-(imidazol-4-yl)-2-oxopropyl phosphate + L-glutamate. It participates in amino-acid biosynthesis; L-histidine biosynthesis; L-histidine from 5-phospho-alpha-D-ribose 1-diphosphate: step 7/9. This is Histidinol-phosphate aminotransferase (hisC) from Xylella fastidiosa (strain Temecula1 / ATCC 700964).